Consider the following 285-residue polypeptide: 2-dehydro-3-deoxyphosphooctonate aldolase (285 aa).

It belongs to the KdsA family.

It localises to the cytoplasm. The catalysed reaction is D-arabinose 5-phosphate + phosphoenolpyruvate + H2O = 3-deoxy-alpha-D-manno-2-octulosonate-8-phosphate + phosphate. The protein operates within carbohydrate biosynthesis; 3-deoxy-D-manno-octulosonate biosynthesis; 3-deoxy-D-manno-octulosonate from D-ribulose 5-phosphate: step 2/3. Its pathway is bacterial outer membrane biogenesis; lipopolysaccharide biosynthesis. This chain is 2-dehydro-3-deoxyphosphooctonate aldolase, found in Methylibium petroleiphilum (strain ATCC BAA-1232 / LMG 22953 / PM1).